We begin with the raw amino-acid sequence, 173 residues long: Shikimate kinase 1 (173 aa).

14–19 (GAGKST) contacts ATP. Ser-18 is a binding site for Mg(2+). Residues Asp-36, Arg-60, and Gly-82 each coordinate substrate. Position 120 (Arg-120) interacts with ATP. Arg-140 is a substrate binding site. Gln-157 serves as a coordination point for ATP.

It belongs to the shikimate kinase family. In terms of assembly, monomer. Mg(2+) is required as a cofactor.

The protein localises to the cytoplasm. The catalysed reaction is shikimate + ATP = 3-phosphoshikimate + ADP + H(+). It functions in the pathway metabolic intermediate biosynthesis; chorismate biosynthesis; chorismate from D-erythrose 4-phosphate and phosphoenolpyruvate: step 5/7. Catalyzes the specific phosphorylation of the 3-hydroxyl group of shikimic acid using ATP as a cosubstrate. The chain is Shikimate kinase 1 from Shigella boydii serotype 18 (strain CDC 3083-94 / BS512).